The following is a 343-amino-acid chain: Protein RecA (343 aa).

An ATP-binding site is contributed by 68 to 75; it reads GPESSGKT.

It belongs to the RecA family.

It localises to the cytoplasm. Functionally, can catalyze the hydrolysis of ATP in the presence of single-stranded DNA, the ATP-dependent uptake of single-stranded DNA by duplex DNA, and the ATP-dependent hybridization of homologous single-stranded DNAs. It interacts with LexA causing its activation and leading to its autocatalytic cleavage. The polypeptide is Protein RecA (Syntrophobacter fumaroxidans (strain DSM 10017 / MPOB)).